The primary structure comprises 342 residues: Phosphate acyltransferase (342 aa).

The protein belongs to the PlsX family. Homodimer. Probably interacts with PlsY.

It localises to the cytoplasm. It carries out the reaction a fatty acyl-[ACP] + phosphate = an acyl phosphate + holo-[ACP]. It participates in lipid metabolism; phospholipid metabolism. Functionally, catalyzes the reversible formation of acyl-phosphate (acyl-PO(4)) from acyl-[acyl-carrier-protein] (acyl-ACP). This enzyme utilizes acyl-ACP as fatty acyl donor, but not acyl-CoA. The sequence is that of Phosphate acyltransferase from Shewanella pealeana (strain ATCC 700345 / ANG-SQ1).